A 323-amino-acid polypeptide reads, in one-letter code: Cytochrome c biogenesis protein CcsA (323 aa).

8 helical membrane-spanning segments follow: residues 9–29 (ILTH…LLNL), 45–62 (MMAT…RWIY), 71–91 (LYES…VPYF), 98–118 (LSAI…SGLL), 143–163 (MLLG…LLVI), 227–247 (IISL…VWAN), 261–275 (TWAF…IYLH), and 285–305 (VGPA…YFGV).

The protein belongs to the CcmF/CycK/Ccl1/NrfE/CcsA family. May interact with Ccs1.

The protein localises to the plastid. It is found in the chloroplast thylakoid membrane. Its function is as follows. Required during biogenesis of c-type cytochromes (cytochrome c6 and cytochrome f) at the step of heme attachment. The polypeptide is Cytochrome c biogenesis protein CcsA (Calycanthus floridus var. glaucus (Eastern sweetshrub)).